Here is a 243-residue protein sequence, read N- to C-terminus: Toxin CcTX-1 (243 aa).

Residues 1–25 show a composition bias toward basic and acidic residues; the sequence is SSPEKKNDMSKPGRMRFDNKKEPRS. A disordered region spans residues 1–48; it reads SSPEKKNDMSKPGRMRFDNKKEPRSSAKNSGNGYGCVDVNAGREPLTG.

In terms of processing, contains disulfide bonds. As to expression, nematocytes.

It localises to the secreted. Its subcellular location is the nematocyst. It is found in the target cell membrane. Functionally, has potent hemolytic activity. Is lethal to crayfish. Causes cutaneous inflammation in humans. May act as a pore-forming toxin, disrupting normal transmembrane ion concentration gradients in susceptible cells. This is Toxin CcTX-1 from Cyanea capillata (Lion's mane jellyfish).